Consider the following 347-residue polypeptide: Magnesium-protoporphyrin IX monomethyl ester [oxidative] cyclase (347 aa).

Belongs to the AcsF family. The cofactor is Fe cation.

It carries out the reaction Mg-protoporphyrin IX 13-monomethyl ester + 3 NADPH + 3 O2 + 2 H(+) = 3,8-divinyl protochlorophyllide a + 3 NADP(+) + 5 H2O. Its pathway is porphyrin-containing compound metabolism; chlorophyll biosynthesis (light-independent). Catalyzes the formation of the isocyclic ring in chlorophyll biosynthesis. Mediates the cyclase reaction, which results in the formation of divinylprotochlorophyllide (Pchlide) characteristic of all chlorophylls from magnesium-protoporphyrin IX 13-monomethyl ester (MgPMME). The chain is Magnesium-protoporphyrin IX monomethyl ester [oxidative] cyclase from Prochlorococcus marinus (strain SARG / CCMP1375 / SS120).